Reading from the N-terminus, the 222-residue chain is Uracil-DNA glycosylase (222 aa).

D61 serves as the catalytic Proton acceptor.

The protein belongs to the uracil-DNA glycosylase (UDG) superfamily. UNG family.

It localises to the cytoplasm. The enzyme catalyses Hydrolyzes single-stranded DNA or mismatched double-stranded DNA and polynucleotides, releasing free uracil.. Its function is as follows. Excises uracil residues from the DNA which can arise as a result of misincorporation of dUMP residues by DNA polymerase or due to deamination of cytosine. The protein is Uracil-DNA glycosylase of Actinobacillus succinogenes (strain ATCC 55618 / DSM 22257 / CCUG 43843 / 130Z).